A 23-amino-acid chain; its full sequence is Phallacidin proprotein (23 aa).

Proline 1 is a propeptide. The segment at residues 2–8 (AWLVDCP) is a cross-link (cyclopeptide (Ala-Pro)). Positions 3–7 (WLVDC) form a cross-link, 2'-cysteinyl-6'-hydroxytryptophan sulfoxide (Trp-Cys). A propeptide spanning residues 9–23 (CVGDDVNFILTRGQK) is cleaved from the precursor.

Belongs to the MSDIN fungal toxin family. Processed by the macrocyclase-peptidase enzyme POPB to yield a toxic cyclic heptapeptide. POPB first removes 10 residues from the N-terminus. Conformational trapping of the remaining peptide forces the enzyme to release this intermediate rather than proceed to macrocyclization. The enzyme rebinds the remaining peptide in a different conformation and catalyzes macrocyclization of the N-terminal 7 residues.

Major toxin that belongs to the bicyclic heptapeptides called phallotoxins. Although structurally related to amatoxins, phallotoxins have a different mode of action, which is the stabilization of F-actin. Phallotoxins are poisonous when administered parenterally, but not orally because of poor absorption. The chain is Phallacidin proprotein from Amanita fuligineoides.